The sequence spans 148 residues: Large ribosomal subunit protein bL9 (148 aa).

Belongs to the bacterial ribosomal protein bL9 family.

Its function is as follows. Binds to the 23S rRNA. The polypeptide is Large ribosomal subunit protein bL9 (Staphylococcus epidermidis (strain ATCC 35984 / DSM 28319 / BCRC 17069 / CCUG 31568 / BM 3577 / RP62A)).